We begin with the raw amino-acid sequence, 186 residues long: ATP synthase subunit b (186 aa).

A helical transmembrane segment spans residues 28-48 (IVWSIIPFAVILFVFAKVVLP).

Belongs to the ATPase B chain family. In terms of assembly, F-type ATPases have 2 components, F(1) - the catalytic core - and F(0) - the membrane proton channel. F(1) has five subunits: alpha(3), beta(3), gamma(1), delta(1), epsilon(1). F(0) has three main subunits: a(1), b(2) and c(10-14). The alpha and beta chains form an alternating ring which encloses part of the gamma chain. F(1) is attached to F(0) by a central stalk formed by the gamma and epsilon chains, while a peripheral stalk is formed by the delta and b chains.

It is found in the cell membrane. Its function is as follows. F(1)F(0) ATP synthase produces ATP from ADP in the presence of a proton or sodium gradient. F-type ATPases consist of two structural domains, F(1) containing the extramembraneous catalytic core and F(0) containing the membrane proton channel, linked together by a central stalk and a peripheral stalk. During catalysis, ATP synthesis in the catalytic domain of F(1) is coupled via a rotary mechanism of the central stalk subunits to proton translocation. In terms of biological role, component of the F(0) channel, it forms part of the peripheral stalk, linking F(1) to F(0). This is ATP synthase subunit b from Corynebacterium urealyticum (strain ATCC 43042 / DSM 7109).